Reading from the N-terminus, the 574-residue chain is ATP-dependent lipid A-core flippase (574 aa).

Helical transmembrane passes span 11–31, 60–80, 156–176, and 244–264; these read LLSYLKPYWGIALLVLVGFGI, WFPLLIVLLVFFRGLGLFMGG, YTNWRLTLCIFIFMPIIGVLV, and LNSPLVQLVMAMAMSLIVWLA. One can recognise an ABC transmembrane type-1 domain in the interval 23–304; the sequence is LLVLVGFGIN…LTDVNEKLQR (282 aa). One can recognise an ABC transporter domain in the interval 335–570; the sequence is VRFDHVTLEY…QGAYFQLHQR (236 aa). An ATP-binding site is contributed by 368 to 375; sequence GRSGAGKT.

It belongs to the ABC transporter superfamily. Lipid exporter (TC 3.A.1.106) family. Homodimer.

It localises to the cell inner membrane. The enzyme catalyses ATP + H2O + lipid A-core oligosaccharideSide 1 = ADP + phosphate + lipid A-core oligosaccharideSide 2.. Involved in lipopolysaccharide (LPS) biosynthesis. Translocates lipid A-core from the inner to the outer leaflet of the inner membrane. Transmembrane domains (TMD) form a pore in the inner membrane and the ATP-binding domain (NBD) is responsible for energy generation. The sequence is that of ATP-dependent lipid A-core flippase from Acinetobacter baylyi (strain ATCC 33305 / BD413 / ADP1).